The chain runs to 369 residues: Maltose/maltodextrin import ATP-binding protein MalK (369 aa).

One can recognise an ABC transporter domain in the interval 4-234; sequence VQLRNVTKAW…PADRFVAGFI (231 aa). 36 to 43 contributes to the ATP binding site; that stretch reads GPSGCGKS.

It belongs to the ABC transporter superfamily. Maltooligosaccharide importer (TC 3.A.1.1.1) family. In terms of assembly, the complex is composed of two ATP-binding proteins (MalK), two transmembrane proteins (MalG and MalK) and a solute-binding protein (MalE).

It is found in the cell inner membrane. It carries out the reaction D-maltose(out) + ATP + H2O = D-maltose(in) + ADP + phosphate + H(+). Part of the ABC transporter complex MalEFGK involved in maltose/maltodextrin import. Responsible for energy coupling to the transport system. The protein is Maltose/maltodextrin import ATP-binding protein MalK of Salmonella choleraesuis (strain SC-B67).